Here is a 952-residue protein sequence, read N- to C-terminus: MTEAAASDIPPFRYTAALADEIERRWQDIWEREGTFHAPNPTGPLADPEHPRAGAEKLYVLDMFPYPSGAGLHVGHPLGYIGTDCFARYQRMAGRNVLHAMGFDAFGLPAEQYAVQTGTHPRTTTEANIARYKAQLRRLGLAHDERRSVATIDADFYRWTQWVFLQIYNAWYDREAKRARPIAELIAEFSGGVRRTPDGRPWRELTDVERRSVVDEYRLAYVSQAPVNWCPGLGTVLANEEVTADGRSERGNFPVFKRNLKQWMMRITAYGDRLLDDLDKLDWPEPIKLMQRNWIGRSIGAHIEFPTSAGDSSAVGEPRINVFTTRPDTIFGATYLVLAPEHALVDDLVPTAWPSGTRDAWTGGQASPRAAVAGYRKVAAAKTDMERQAETKEKTGVFIGAYATNPVTGAQIPIFIADYVLAGYGTGAIMAVPGQDERDWAFAEVFDLPIVRTVRPAEGFDGKAYTGEGPAINSAAPERGLNLDGLGVAEAKARTTAWLEASGHGSGAVTYRLRDWLFSRQRYWGEPFPIVYDETGAAIALPEDMLPVELPEVDDFSPRTFDPADAGSNPETPLSRRRDWVEVELDLGDGPKRYTRETNVMPQWAGSCWYELRYLDPTNADRFVDPDTERYWMGPRGEGDCGGTDLYVGGAEHAVLHLLYARFWHKVLYDLGHVSSFEPFRKLFNQGYIQAYAYTDARGAYVPAEEVVERSGAYYLGDVEVSREYGKMGKSLRNVVTPDEMCAAYGADTFRVYEMSMGPLEVSRPWETRAVVGSFRFLQRVWRAIVDERSGASRVVDAPADEATRRLLHRIVDGVRGDMEAMRFNTSVAKLIELTNALTRLPATPREVAEPLVLMVAPFAPHVAEELWRRMGHPTSLAYADFPVADPDLLVAESVTYPVQVNGKVRGRVQVPADASEEVVRAAALDAVATALEGREPRKVIVVPGRMVSVVR.

The 'HIGH' region signature appears at 65-76 (PYPSGAGLHVGH). A 'KMSKS' region motif is present at residues 727-731 (KMGKS). ATP is bound at residue Lys730.

This sequence belongs to the class-I aminoacyl-tRNA synthetase family.

It localises to the cytoplasm. The enzyme catalyses tRNA(Leu) + L-leucine + ATP = L-leucyl-tRNA(Leu) + AMP + diphosphate. This is Leucine--tRNA ligase from Salinispora arenicola (strain CNS-205).